The following is a 162-amino-acid chain: Protein mmf1, mitochondrial (162 aa).

This sequence belongs to the RutC family.

The protein localises to the mitochondrion. Its subcellular location is the cytoplasm. Functionally, plays a role in the maintenance of mitochondrial DNA. This Schizosaccharomyces pombe (strain 972 / ATCC 24843) (Fission yeast) protein is Protein mmf1, mitochondrial (mmf1).